Here is a 433-residue protein sequence, read N- to C-terminus: Tol-Pal system protein TolB (433 aa).

The signal sequence occupies residues 1–21 (MINLFRGLLVVLCFASAMVSA).

This sequence belongs to the TolB family. The Tol-Pal system is composed of five core proteins: the inner membrane proteins TolA, TolQ and TolR, the periplasmic protein TolB and the outer membrane protein Pal. They form a network linking the inner and outer membranes and the peptidoglycan layer.

The protein resides in the periplasm. In terms of biological role, part of the Tol-Pal system, which plays a role in outer membrane invagination during cell division and is important for maintaining outer membrane integrity. The chain is Tol-Pal system protein TolB from Pseudomonas syringae pv. syringae (strain B728a).